We begin with the raw amino-acid sequence, 36 residues long: Conotoxin Bu21 (36 aa).

Positions 1–21 (DGANAEATDNKPGVFERDEKK) are excised as a propeptide. Cystine bridges form between cysteine 22–cysteine 28 and cysteine 23–cysteine 34.

It belongs to the conotoxin A superfamily. As to expression, expressed by the venom duct.

It is found in the secreted. This Conus bullatus (Bubble cone) protein is Conotoxin Bu21.